The chain runs to 305 residues: GMP synthase [glutamine-hydrolyzing] subunit B (305 aa).

One can recognise a GMPS ATP-PPase domain in the interval 2–185 (VNVDEFIEEA…LDLEEIISER (184 aa)). 29–35 (SGGVDSS) lines the ATP pocket.

Heterodimer composed of a glutamine amidotransferase subunit (A) and a GMP-binding subunit (B).

It catalyses the reaction XMP + L-glutamine + ATP + H2O = GMP + L-glutamate + AMP + diphosphate + 2 H(+). It functions in the pathway purine metabolism; GMP biosynthesis; GMP from XMP (L-Gln route): step 1/1. Catalyzes the synthesis of GMP from XMP. The polypeptide is GMP synthase [glutamine-hydrolyzing] subunit B (Haloarcula marismortui (strain ATCC 43049 / DSM 3752 / JCM 8966 / VKM B-1809) (Halobacterium marismortui)).